A 242-amino-acid polypeptide reads, in one-letter code: Lactate utilization protein A 2 (242 aa).

It belongs to the LutA/YkgE family.

Is involved in L-lactate degradation and allows cells to grow with lactate as the sole carbon source. The chain is Lactate utilization protein A 2 from Bacillus cereus (strain ZK / E33L).